The sequence spans 97 residues: Acylphosphatase-2 (97 aa).

Alanine 2 is modified (N-acetylalanine). The Acylphosphatase-like domain maps to 7–97; it reads SVDYEVFGTV…LEYSNFSIRY (91 aa). Residues arginine 22 and asparagine 40 contribute to the active site. Serine 91 is modified (phosphoserine).

This sequence belongs to the acylphosphatase family.

The enzyme catalyses an acyl phosphate + H2O = a carboxylate + phosphate + H(+). Its physiological role is not yet clear. The protein is Acylphosphatase-2 (Acyp2) of Rattus norvegicus (Rat).